The following is a 481-amino-acid chain: UDP-N-acetylmuramate--L-alanine ligase (481 aa).

123–129 lines the ATP pocket; sequence GTHGKTT.

It belongs to the MurCDEF family.

Its subcellular location is the cytoplasm. The catalysed reaction is UDP-N-acetyl-alpha-D-muramate + L-alanine + ATP = UDP-N-acetyl-alpha-D-muramoyl-L-alanine + ADP + phosphate + H(+). It functions in the pathway cell wall biogenesis; peptidoglycan biosynthesis. Its function is as follows. Cell wall formation. The chain is UDP-N-acetylmuramate--L-alanine ligase from Pseudomonas fluorescens (strain SBW25).